We begin with the raw amino-acid sequence, 262 residues long: Type III pantothenate kinase (262 aa).

6–13 contacts ATP; the sequence is DVGNTNAV. Substrate contacts are provided by residues Y100 and 107–110; that span reads GADR. D109 serves as the catalytic Proton acceptor. D129 contacts K(+). T132 contributes to the ATP binding site. Substrate is bound at residue T184.

The protein belongs to the type III pantothenate kinase family. In terms of assembly, homodimer. It depends on NH4(+) as a cofactor. K(+) serves as cofactor.

It is found in the cytoplasm. The enzyme catalyses (R)-pantothenate + ATP = (R)-4'-phosphopantothenate + ADP + H(+). It participates in cofactor biosynthesis; coenzyme A biosynthesis; CoA from (R)-pantothenate: step 1/5. In terms of biological role, catalyzes the phosphorylation of pantothenate (Pan), the first step in CoA biosynthesis. This is Type III pantothenate kinase from Bacillus cereus (strain B4264).